We begin with the raw amino-acid sequence, 960 residues long: Dynamin-like GTPase OPA1, mitochondrial (960 aa).

A mitochondrion-targeting transit peptide spans 1 to 87 (MWRAGRAALA…TKYGYQPRRN (87 aa)). Over 88 to 96 (FWPARLAAR) the chain is Mitochondrial matrix. Residues 97–113 (LLKLRYIILGSAVGGGY) form a helical membrane-spanning segment. At 114–770 (TAKKTFDEWK…NAIENMIGPD (657 aa)) the chain is on the mitochondrial intermembrane side. A coiled-coil region spans residues 210–254 (SDKEKIDQLQEELLHTQLKYQRILERLEKENKELRKLVLQKDDKG). Positions 217–222 (QLQEEL) match the LQQQIQ motif motif. Lys-228 is modified (N6-acetyllysine). An LQQQIQ motif motif is present at residues 234 to 239 (ERLEKE). Residues 285–561 (QDHLPRVVVV…FWKMVRESVE (277 aa)) form the Dynamin-type G domain. The segment at 295–302 (GDQSAGKT) is G1 motif. GTP-binding residues include Ser-298, Gly-300, Lys-301, Thr-302, Ser-303, and Gly-317. Thr-302 is a binding site for Mg(2+). The interval 321–324 (MMTR) is G2 motif. 2 residues coordinate Mg(2+): Thr-323 and Asp-398. The G3 motif stretch occupies residues 398–401 (DLPG). The interval 467–470 (TKVD) is G4 motif. GTP contacts are provided by Lys-468, Asp-470, and Thr-503. The segment at 501–504 (VVTG) is G5 motif. Stalk region regions lie at residues 589 to 836 (DRNE…IKDT) and 874 to 928 (CNDV…VKLL). Residues 736 to 856 (SDKQQWDAAI…KTALNHCNLC (121 aa)) form a paddle region region. An intramembrane segment occupies 771-781 (WKKRWIYWKNR). The Mitochondrial intermembrane segment spans residues 782 to 960 (TQEQCVHNET…AFIEALHQEK (179 aa)). An intrachain disulfide couples Cys-856 to Cys-874. A coiled-coil region spans residues 895-960 (RQQLTNTEVR…AFIEALHQEK (66 aa)).

Belongs to the TRAFAC class dynamin-like GTPase superfamily. Dynamin/Fzo/YdjA family. Oligomeric complex consisting of membrane-bound and soluble forms of OPA1. Interacts with RCC1L; RCC1L acts as a guanine nucleotide exchange factor (GEF) for OPA1 by exchanging bound GDP for free GTP. Interacts with CHCHD3 and IMMT; these interactions occur preferentially with soluble OPA1 forms. Interacts with PRELID1. Post-translationally, cleaved by OMA1 or YME1L downstream of the transmembrane region in response to different signals to generate soluble forms. Cleaved by OMA1 at position S1 following stress conditions, generating the short soluble form (Dynamin-like GTPase OPA1, short form; S-OPA1). AFG3L2 is involved in the regulation of OMA1-dependent processing of OPA1. PARL-dependent proteolytic processing releases an antiapoptotic soluble form not required for mitochondrial fusion. In terms of processing, cleavage at position S2 by YME1L is required to mediate oxidative phosphorylation (OXPHOS)-induced mitochondrial fusion. Cleavage occurs in the sequence motif Leu-Gln-Gln-Gln-Ile-Gln (LQQQIQ). As to expression, expressed in brain as well as retinal ganglion, starbust amacrine and horizontal cells of the retina. Absent from nerve fibers and photoreceptor cells of the retina.

The protein resides in the mitochondrion inner membrane. Its subcellular location is the mitochondrion intermembrane space. The catalysed reaction is GTP + H2O = GDP + phosphate + H(+). Activated by guanine nucleotide exchange factor RCC1L. In terms of biological role, dynamin-related GTPase that is essential for normal mitochondrial morphology by mediating fusion of the mitochondrial inner membranes, regulating cristae morphology and maintaining respiratory chain function. Exists in two forms: the transmembrane, long form (Dynamin-like GTPase OPA1, long form; L-OPA1), which is tethered to the inner mitochondrial membrane, and the short soluble form (Dynamin-like GTPase OPA1, short form; S-OPA1), which results from proteolytic cleavage and localizes in the intermembrane space. Both forms (L-OPA1 and S-OPA1) cooperate to catalyze the fusion of the mitochondrial inner membrane. The equilibrium between L-OPA1 and S-OPA1 is essential: excess levels of S-OPA1, produced by cleavage by OMA1 following loss of mitochondrial membrane potential, lead to an impaired equilibrium between L-OPA1 and S-OPA1, inhibiting mitochondrial fusion. The balance between L-OPA1 and S-OPA1 also influences cristae shape and morphology. Involved in remodeling cristae and the release of cytochrome c during apoptosis. Proteolytic processing by PARL in response to intrinsic apoptotic signals may lead to disassembly of OPA1 oligomers and release of the caspase activator cytochrome C (CYCS) into the mitochondrial intermembrane space. Acts as a regulator of T-helper Th17 cells, which are characterized by cells with fused mitochondria with tight cristae, by mediating mitochondrial membrane remodeling: OPA1 is required for interleukin-17 (IL-17) production. Its role in mitochondrial morphology is required for mitochondrial genome maintenance. Its function is as follows. Constitutes the transmembrane long form (L-OPA1) that plays a central role in mitochondrial inner membrane fusion and cristae morphology. L-OPA1 and the soluble short form (S-OPA1) form higher-order helical assemblies that coordinate the fusion of mitochondrial inner membranes. Inner membrane-anchored L-OPA1 molecules initiate membrane remodeling by recruiting soluble S-OPA1 to rapidly polymerize into a flexible cylindrical scaffold encaging the mitochondrial inner membrane. Once at the membrane surface, the formation of S-OPA1 helices induce bilayer curvature. OPA1 dimerization through the paddle region, which inserts into cardiolipin-containing membrane, promotes GTP hydrolysis and the helical assembly of a flexible OPA1 lattice on the membrane, which drives membrane curvature and mitochondrial fusion. Plays a role in the maintenance and remodeling of mitochondrial cristae, some invaginations of the mitochondrial inner membrane that provide an increase in the surface area. Probably acts by forming helical filaments at the inside of inner membrane tubes with the shape and dimensions of crista junctions. The equilibrium between L-OPA1 and S-OPA1 influences cristae shape and morphology: increased L-OPA1 levels promote cristae stacking and elongated mitochondria, while increased S-OPA1 levels correlated with irregular cristae packing and round mitochondria shape. Functionally, constitutes the soluble short form (S-OPA1) generated by cleavage by OMA1, which plays a central role in mitochondrial inner membrane fusion and cristae morphology. The transmembrane long form (L-OPA1) and the S-OPA1 form higher-order helical assemblies that coordinate the fusion of mitochondrial inner membranes. Inner membrane-anchored L-OPA1 molecules initiate membrane remodeling by recruiting soluble S-OPA1 to rapidly polymerize into a flexible cylindrical scaffold encaging the mitochondrial inner membrane. Once at the membrane surface, the formation of S-OPA1 helices induce bilayer curvature. OPA1 dimerization through the paddle region, which inserts into cardiolipin-containing membrane, promotes GTP hydrolysis and the helical assembly of a flexible OPA1 lattice on the membrane, which drives membrane curvature and mitochondrial fusion. Excess levels of S-OPA1 produced by cleavage by OMA1 following stress conditions that induce loss of mitochondrial membrane potential, lead to an impaired equilibrium between L-OPA1 and S-OPA1, thereby inhibiting mitochondrial fusion. Involved in mitochondrial safeguard in response to transient mitochondrial membrane depolarization by mediating flickering: cleavage by OMA1 leads to excess production of S-OPA1, preventing mitochondrial hyperfusion. Plays a role in the maintenance and remodeling of mitochondrial cristae, some invaginations of the mitochondrial inner membrane that provide an increase in the surface area. Probably acts by forming helical filaments at the inside of inner membrane tubes with the shape and dimensions of crista junctions. The equilibrium between L-OPA1 and S-OPA1 influences cristae shape and morphology: increased L-OPA1 levels promote cristae stacking and elongated mitochondria, while increased S-OPA1 levels correlated with irregular cristae packing and round mitochondria shape. Isoforms that contain the alternative exon 4b are required for mitochondrial genome maintenance, possibly by anchoring the mitochondrial nucleoids to the inner mitochondrial membrane. This Rattus norvegicus (Rat) protein is Dynamin-like GTPase OPA1, mitochondrial.